The chain runs to 241 residues: Uridylate kinase (241 aa).

ATP is bound at residue 15–18 (KISG). Residues 23–28 (GDQGFG) form an involved in allosteric activation by GTP region. Gly57 contributes to the UMP binding site. ATP is bound by residues Gly58 and Arg62. Residues Asp77 and 138-145 (TGNPYFTT) each bind UMP. ATP-binding residues include Thr165, Tyr171, and Asp174.

Belongs to the UMP kinase family. Homohexamer.

Its subcellular location is the cytoplasm. It catalyses the reaction UMP + ATP = UDP + ADP. The protein operates within pyrimidine metabolism; CTP biosynthesis via de novo pathway; UDP from UMP (UMPK route): step 1/1. Allosterically activated by GTP. Inhibited by UTP. Its function is as follows. Catalyzes the reversible phosphorylation of UMP to UDP. In Paracoccus zeaxanthinifaciens, this protein is Uridylate kinase.